The primary structure comprises 533 residues: UDP-glucuronosyltransferase 1-2 (533 aa).

The first 27 residues, 1-27, serve as a signal peptide directing secretion; sequence MDTGLCAPLRGLSGLLLLLCALPWAEG. N-linked (GlcNAc...) asparagine glycosylation is found at Asn133, Asn141, Asn295, and Asn433. The helical transmembrane segment at 491 to 507 threads the bilayer; that stretch reads VIGFLLAIVLTVVFIVY.

It belongs to the UDP-glycosyltransferase family.

The protein resides in the microsome. It localises to the endoplasmic reticulum membrane. It catalyses the reaction glucuronate acceptor + UDP-alpha-D-glucuronate = acceptor beta-D-glucuronoside + UDP + H(+). Functionally, UDPGT is of major importance in the conjugation and subsequent elimination of potentially toxic xenobiotics and endogenous compounds. The protein is UDP-glucuronosyltransferase 1-2 (Ugt1a2) of Rattus norvegicus (Rat).